The following is a 199-amino-acid chain: Photosystem I reaction center subunit XI (199 aa).

The next 2 helical transmembrane spans lie at 108 to 128 (ITAG…LLVL) and 165 to 185 (FWLG…TLHL).

The protein belongs to the PsaL family.

The protein localises to the cellular thylakoid membrane. This Prochlorococcus marinus (strain MIT 9515) protein is Photosystem I reaction center subunit XI.